A 495-amino-acid polypeptide reads, in one-letter code: ATP synthase subunit beta, chloroplastic (495 aa).

172 to 179 (GGAGVGKT) is a binding site for ATP.

It belongs to the ATPase alpha/beta chains family. As to quaternary structure, F-type ATPases have 2 components, CF(1) - the catalytic core - and CF(0) - the membrane proton channel. CF(1) has five subunits: alpha(3), beta(3), gamma(1), delta(1), epsilon(1). CF(0) has four main subunits: a(1), b(1), b'(1) and c(9-12).

Its subcellular location is the plastid. The protein resides in the chloroplast thylakoid membrane. The catalysed reaction is ATP + H2O + 4 H(+)(in) = ADP + phosphate + 5 H(+)(out). In terms of biological role, produces ATP from ADP in the presence of a proton gradient across the membrane. The catalytic sites are hosted primarily by the beta subunits. The protein is ATP synthase subunit beta, chloroplastic of Hyacinthus orientalis (Common hyacinth).